The primary structure comprises 162 residues: MKVRILTVGNKMPKWVQTGFDEYHKRIQPMLTTEVVEIAAAKRAKNPSDANLAQYREQEGQAILAAHAVAGREQLWVLDVKGKMLSTENLADKLSDGMQQGDDIALVIGGADGVSPEVLAKADVKWSLSALTLPHPLVRVVLMEQLYRAMSINHNHPYHRGN.

S-adenosyl-L-methionine contacts are provided by residues L78, G109, and 128–133 (LSALTL).

Belongs to the RNA methyltransferase RlmH family. Homodimer.

The protein localises to the cytoplasm. The enzyme catalyses pseudouridine(1915) in 23S rRNA + S-adenosyl-L-methionine = N(3)-methylpseudouridine(1915) in 23S rRNA + S-adenosyl-L-homocysteine + H(+). Specifically methylates the pseudouridine at position 1915 (m3Psi1915) in 23S rRNA. This chain is Ribosomal RNA large subunit methyltransferase H, found in Psychrobacter cryohalolentis (strain ATCC BAA-1226 / DSM 17306 / VKM B-2378 / K5).